A 244-amino-acid polypeptide reads, in one-letter code: Ribonuclease PH (244 aa).

Residues R90 and 128–130 contribute to the phosphate site; that span reads GTR.

It belongs to the RNase PH family. In terms of assembly, homohexameric ring arranged as a trimer of dimers.

The enzyme catalyses tRNA(n+1) + phosphate = tRNA(n) + a ribonucleoside 5'-diphosphate. Phosphorolytic 3'-5' exoribonuclease that plays an important role in tRNA 3'-end maturation. Removes nucleotide residues following the 3'-CCA terminus of tRNAs; can also add nucleotides to the ends of RNA molecules by using nucleoside diphosphates as substrates, but this may not be physiologically important. Probably plays a role in initiation of 16S rRNA degradation (leading to ribosome degradation) during starvation. This chain is Ribonuclease PH, found in Prochlorococcus marinus (strain MIT 9313).